Consider the following 196-residue polypeptide: Agamous-like MADS-box protein AGL27 (196 aa).

In terms of domain architecture, MADS-box spans 1-61 (MGRRKIEIKR…GKLYDSSSGD (61 aa)). Residues 80-170 (ALDLEEKIQN…ASQMGKNTLL (91 aa)) form the K-box domain. The segment at 175–196 (ERGMFPGSSSGNKIPETLPLLN) is disordered.

Interacts with AGL39, AGL97 and AGL74. In terms of tissue distribution, expressed in most plant tissues, embryo, seedlings, roots, leaves, stems, inflorescence, pollen, siliques and flowers.

The protein resides in the nucleus. Probable transcription factor involved in the negative regulation of flowering time in both long and short days, probably through the photoperiodic and vernalization pathways. Prevents premature flowering. This is Agamous-like MADS-box protein AGL27 (AGL27) from Arabidopsis thaliana (Mouse-ear cress).